A 157-amino-acid polypeptide reads, in one-letter code: Cytochrome c-type biogenesis protein CcmE (157 aa).

The Cytoplasmic segment spans residues 1 to 8 (MHPVRKQR). A helical; Signal-anchor for type II membrane protein transmembrane segment spans residues 9 to 29 (LMTVLFIVIASSVAVGLMVFA). At 30 to 157 (LSKNLNLFYP…KTCEGLDYAS (128 aa)) the chain is on the periplasmic side. Positions 124 and 128 each coordinate heme.

It belongs to the CcmE/CycJ family.

It is found in the cell inner membrane. In terms of biological role, heme chaperone required for the biogenesis of c-type cytochromes. Transiently binds heme delivered by CcmC and transfers the heme to apo-cytochromes in a process facilitated by CcmF and CcmH. The polypeptide is Cytochrome c-type biogenesis protein CcmE (Saccharophagus degradans (strain 2-40 / ATCC 43961 / DSM 17024)).